A 208-amino-acid chain; its full sequence is Large ribosomal subunit protein uL4 (208 aa).

Positions Arg-45 to Ser-77 are disordered.

This sequence belongs to the universal ribosomal protein uL4 family. Part of the 50S ribosomal subunit.

One of the primary rRNA binding proteins, this protein initially binds near the 5'-end of the 23S rRNA. It is important during the early stages of 50S assembly. It makes multiple contacts with different domains of the 23S rRNA in the assembled 50S subunit and ribosome. In terms of biological role, forms part of the polypeptide exit tunnel. The protein is Large ribosomal subunit protein uL4 of Christiangramia forsetii (strain DSM 17595 / CGMCC 1.15422 / KT0803) (Gramella forsetii).